The primary structure comprises 339 residues: MSDSPIDGSPQPEPDYRYKKDELFKRIKVTTFAQLVIQVASLSDQTLEVTAEEIQRLEDSDSATSEADTDIAAKTNGKGSPEEQSPSPVQFINSTGAGDASRSTLQSVISGVGELDVDKGLVKKEEPSGKDKPYPDCPFLLLDVRDRDSYQQCHIVGAYSYPIATLSRTMNPYSNDILEYKNAHGKIIILYDDDERLASQAATTMCERGFENLFMLSGGLKVLAQKFPEGLVTGSLPASCQQALPFGSVRKRPGPKMPALPAENKWRFTPEDLKKIECYLEADQGPANNPSRLNQNNSAGRDLKVPAGRGGQNLPTGCPTSHSNSRTLNSGHLQGKPWK.

Residues 56–99 form a disordered region; sequence RLEDSDSATSEADTDIAAKTNGKGSPEEQSPSPVQFINSTGAGD. Phosphoserine is present on residues serine 62 and serine 65. Positions 62–73 are enriched in low complexity; that stretch reads SATSEADTDIAA. Residue threonine 75 is modified to Phosphothreonine. 2 positions are modified to phosphoserine: serine 80 and serine 87. Polar residues predominate over residues 82-99; the sequence is EEQSPSPVQFINSTGAGD. The Rhodanese domain occupies 135-232; that stretch reads PDCPFLLLDV…LAQKFPEGLV (98 aa). The tract at residues 283–339 is disordered; that stretch reads DQGPANNPSRLNQNNSAGRDLKVPAGRGGQNLPTGCPTSHSNSRTLNSGHLQGKPWK. The span at 286–299 shows a compositional bias: polar residues; sequence PANNPSRLNQNNSA. Arginine 309 is modified (omega-N-methylarginine). Positions 313 to 332 are enriched in polar residues; that stretch reads NLPTGCPTSHSNSRTLNSGH.

It belongs to the CEP41 family. In terms of assembly, found in a complex with TTLL6.

It localises to the cytoplasm. The protein resides in the cytoskeleton. The protein localises to the microtubule organizing center. Its subcellular location is the centrosome. It is found in the cell projection. It localises to the cilium. The protein resides in the cilium basal body. Its function is as follows. Required during ciliogenesis for tubulin glutamylation in cilium. Probably acts by participating in the transport of TTLL6, a tubulin polyglutamylase, between the basal body and the cilium. The chain is Centrosomal protein of 41 kDa (Cep41) from Rattus norvegicus (Rat).